A 204-amino-acid polypeptide reads, in one-letter code: Proteasome subunit beta type-3 (204 aa).

The protein belongs to the peptidase T1B family. The 26S proteasome consists of a 20S proteasome core and two 19S regulatory subunits. The 20S proteasome core is composed of 28 subunits that are arranged in four stacked rings, resulting in a barrel-shaped structure. The two end rings are each formed by seven alpha subunits, and the two central rings are each formed by seven beta subunits. The catalytic chamber with the active sites is on the inside of the barrel.

Its subcellular location is the cytoplasm. It is found in the nucleus. Non-catalytic component of the proteasome, a multicatalytic proteinase complex which is characterized by its ability to cleave peptides with Arg, Phe, Tyr, Leu, and Glu adjacent to the leaving group at neutral or slightly basic pH. The proteasome has an ATP-dependent proteolytic activity. This Oryza sativa subsp. japonica (Rice) protein is Proteasome subunit beta type-3 (PBC1).